A 643-amino-acid chain; its full sequence is DNA-directed RNA polymerase subunit beta' (643 aa).

Zn(2+) is bound by residues cysteine 83, cysteine 85, cysteine 98, and cysteine 101. The Mg(2+) site is built by aspartate 480, aspartate 482, and aspartate 484.

This sequence belongs to the RNA polymerase beta' chain family. RpoC1 subfamily. In terms of assembly, in plastids the minimal PEP RNA polymerase catalytic core is composed of four subunits: alpha, beta, beta', and beta''. When a (nuclear-encoded) sigma factor is associated with the core the holoenzyme is formed, which can initiate transcription. Mg(2+) is required as a cofactor. Requires Zn(2+) as cofactor.

It localises to the plastid. It is found in the organellar chromatophore. It catalyses the reaction RNA(n) + a ribonucleoside 5'-triphosphate = RNA(n+1) + diphosphate. Functionally, DNA-dependent RNA polymerase catalyzes the transcription of DNA into RNA using the four ribonucleoside triphosphates as substrates. The protein is DNA-directed RNA polymerase subunit beta' of Paulinella chromatophora.